The following is a 78-amino-acid chain: Major outer membrane lipoprotein Lpp 1 (78 aa).

Positions 1–20 (MNRTKLVLGAVILGSTLLAG) are cleaved as a signal peptide. Residue Cys21 is the site of N-palmitoyl cysteine attachment. Cys21 is lipidated: S-diacylglycerol cysteine. 2 repeats span residues 24–34 (NAKIDQLSSDV) and 38–48 (NAKVDQLSNDV). A coiled-coil region spans residues 27–75 (IDQLSSDVQTLNAKVDQLSNDVNAMRSDVQAAKDDAARANQRLDNQATK). The tract at residues 56 to 78 (QAAKDDAARANQRLDNQATKYRK) is disordered. Over residues 68 to 78 (RLDNQATKYRK) the composition is skewed to polar residues. Position 78 is an N6-murein peptidoglycan lysine (Lys78).

Belongs to the Lpp family. In terms of assembly, homotrimer.

Its subcellular location is the cell outer membrane. The protein resides in the secreted. It is found in the cell wall. Its function is as follows. A highly abundant outer membrane lipoprotein that controls the distance between the inner and outer membranes. The only protein known to be covalently linked to the peptidoglycan network (PGN). Also non-covalently binds the PGN. The link between the cell outer membrane and PGN contributes to maintenance of the structural and functional integrity of the cell envelope, and maintains the correct distance between the PGN and the outer membrane. This is Major outer membrane lipoprotein Lpp 1 from Salmonella paratyphi A (strain ATCC 9150 / SARB42).